The sequence spans 379 residues: Sialidase-2 (379 aa).

Residues 20–23 carry the FRIP motif motif; the sequence is YRIP. Residues R21 and R41 each coordinate substrate. The Proton acceptor role is filled by D46. The stretch at 127–138 is one BNR 1 repeat; that stretch reads VSSTDHGRTWSP. Y179 and Y181 together coordinate substrate. The BNR 2 repeat unit spans residues 197-208; sequence FISLDHGHTWKL. Positions 218, 237, and 303 each coordinate substrate. R303 is an active-site residue. The active-site Nucleophile is Y333. The active site involves E354.

Belongs to the glycosyl hydrolase 33 family. Highly expressed in heart.

The protein resides in the cytoplasm. It localises to the cytosol. It catalyses the reaction Hydrolysis of alpha-(2-&gt;3)-, alpha-(2-&gt;6)-, alpha-(2-&gt;8)- glycosidic linkages of terminal sialic acid residues in oligosaccharides, glycoproteins, glycolipids, colominic acid and synthetic substrates.. It carries out the reaction a ganglioside GD1a + H2O = a ganglioside GM1 + N-acetylneuraminate. The catalysed reaction is a ganglioside GM1 + H2O = a ganglioside GA1 + N-acetylneuraminate. The enzyme catalyses a ganglioside GT1b + H2O = a ganglioside GD1b + N-acetylneuraminate. It catalyses the reaction a ganglioside GD1b + H2O = a ganglioside GM1 + N-acetylneuraminate. It carries out the reaction a ganglioside GD3 + H2O = a ganglioside GM3 + N-acetylneuraminate. The catalysed reaction is a ganglioside GM3 + H2O = a beta-D-galactosyl-(1-&gt;4)-beta-D-glucosyl-(1&lt;-&gt;1)-ceramide + N-acetylneuraminate. The enzyme catalyses a ganglioside GM2 + H2O = a ganglioside GA2 + N-acetylneuraminate. It catalyses the reaction a neolactoside IV(3)-alpha-NeuAc-nLc4Cer(d18:1(4E)) + H2O = a neolactoside nLc4Cer(d18:1(4E)) + N-acetylneuraminate. It carries out the reaction N-acetyl-alpha-neuraminosyl-(2-&gt;3)-beta-D-galactosyl-(1-&gt;4)-D-glucose + H2O = lactose + N-acetylneuraminate. In terms of biological role, exo-alpha-sialidase that catalyzes the hydrolytic cleavage of the terminal sialic acid (N-acetylneuraminic acid, Neu5Ac) of a glycan moiety in the catabolism of glycolipids, glycoproteins and oligosacharides. Recognizes sialyl linkage positions of the glycan moiety as well as the supramolecular organization of the sialoglycoconjugate. Displays preference for alpha-(2-&gt;3)-sialylated GD1a and GT1B gangliosides over alpha-(2-&gt;8)-sialylated GD1b, in both monomeric forms and micelles. Hydrolyzes exclusively monomeric GM1 ganglioside, but has no activity toward the miscellar form. Has lower sialidase activity for glycoproteins such as fetuin and TF/transferrin that carry a mixture of alpha-(2-&gt;3) and alpha-(2-&gt;6)-sialyl linkages. Cleaves milk oligosaccharide alpha-(2-&gt;3)-sialyllactose, but is inactive toward isomer alpha-(2-&gt;6)-sialyllactose isomer. Has no activity toward colominic acid, a homomer of alpha-(2-&gt;8)-linked Neu5Ac residues. This Mus musculus (Mouse) protein is Sialidase-2 (Neu2).